We begin with the raw amino-acid sequence, 551 residues long: Probable alpha-glucosidase (551 aa).

Aspartate 212 acts as the Nucleophile in catalysis. The active-site Proton donor is the glutamate 272.

It belongs to the glycosyl hydrolase 13 family.

It carries out the reaction Hydrolysis of terminal, non-reducing (1-&gt;4)-linked alpha-D-glucose residues with release of alpha-D-glucose.. This is Probable alpha-glucosidase (aglA) from Rhizobium meliloti (strain 1021) (Ensifer meliloti).